Reading from the N-terminus, the 276-residue chain is 4-chlorobenzoyl coenzyme A dehalogenase-2 (276 aa).

66 to 71 (AGFDLE) is a substrate binding site. Residue H93 is the Proton acceptor of the active site. G117 lines the substrate pocket. The active-site Nucleophile is D148. R261 is a substrate binding site.

It belongs to the enoyl-CoA hydratase/isomerase family. As to quaternary structure, homotetramer.

The catalysed reaction is 4-chlorobenzoyl-CoA + H2O = 4-hydroxybenzoyl-CoA + chloride + H(+). It participates in xenobiotic degradation; 4-chlorobenzoate degradation; 4-hydroxybenzoate from 4-chlorobenzoate: step 2/3. Its function is as follows. Dehalogenates 4-chlorobenzoyl-CoA, 4-iodobenzoyl-CoA, 4-bromobenzoyl-CoA and, at a slower rate, 4-fluorobenzoyl-CoA. Does not dehalogenate 2-chlorobenzoyl-CoA or 3-chlorobenzoyl-CoA. This Arthrobacter sp protein is 4-chlorobenzoyl coenzyme A dehalogenase-2.